The chain runs to 553 residues: Thioredoxin domain-containing protein 2 (553 aa).

Disordered regions lie at residues 1–37 (MDVD…DANE) and 77–442 (TEES…EETM). Residues 99 to 143 (PKQDDSPKSSEETIQPKEGDIPKAPEETIQSKKEDLPKSSEKAIQ) show a composition bias toward basic and acidic residues. 22 tandem repeats follow at residues 113 to 127 (QPKE…EETI), 128 to 142 (QSKK…EKAI), 143 to 157 (QPKE…AKPI), 158 to 172 (QPKL…VKPS), 173 to 187 (QPKE…EETI), 188 to 202 (QSKK…EEAI), 203 to 217 (QPKE…AKPI), 218 to 232 (QPKL…VKPS), 233 to 247 (QPKE…EETI), 248 to 262 (QPKE…AKPI), 263 to 277 (QPKL…VKPS), 278 to 292 (QPKE…EEAI), 293 to 307 (QPKE…EEAI), 308 to 322 (QPKE…EEAI), 323 to 337 (QPKE…EEAI), 338 to 352 (QPKE…EETI), 353 to 367 (QPKK…EEAI), 368 to 382 (QPKE…KQAI), 383 to 397 (QPKE…EEAI), 398 to 412 (PPKE…EETI), 413 to 427 (QPKE…EEAT), and 428 to 442 (PSKE…EETM). The tract at residues 113–442 (QPKEGDIPKA…DILKPEEETM (330 aa)) is 22 X 15 AA approximate tandem repeat of Q-P-K-X-G-D-I-P-K-S-[PS]-E-[KE]-X-I. Residues 173-209 (QPKEGDIPKAPEETIQSKKEDLPKSSEEAIQPKEGDI) show a composition bias toward basic and acidic residues. Residues 233 to 254 (QPKESDIPKSPEETIQPKEGDI) are compositionally biased toward basic and acidic residues. Composition is skewed to basic and acidic residues over residues 278–376 (QPKE…DIPK) and 385–439 (KEGD…KPEE). Serine 362 carries the post-translational modification Phosphoserine. A Phosphoserine modification is found at serine 392. Residues 429–553 (SKEGDILKPE…KLEAVIAELK (125 aa)) form the Thioredoxin domain. A disulfide bridge links cysteine 480 with cysteine 483.

In terms of tissue distribution, testis-specific. Only expressed during spermiogenesis, prominently in round and elongating spermatids.

Its subcellular location is the cytoplasm. Functionally, probably plays a regulatory role in sperm development. May participate in regulation of fibrous sheath (FS) assembly by supporting the formation of disulfide bonds during sperm tail morphogenesis. May also be required to rectify incorrect disulfide pairing and generate suitable pairs between the FS constituents. Can reduce disulfide bonds in vitro in the presence of NADP and thioredoxin reductase. In Homo sapiens (Human), this protein is Thioredoxin domain-containing protein 2 (TXNDC2).